Here is a 535-residue protein sequence, read N- to C-terminus: Sodium channel protein Nach (535 aa).

At 1-49 (MGHQEELKPEQVDLKVTPFVGYLRRTWSDFCATSSIHGLKYTRDEDTNK) the chain is on the cytoplasmic side. The chain crosses the membrane as a helical span at residues 50–70 (IVHLVWLLISVVMFICAVVMA). At 71–471 (RTFYMDYRSS…LVSNLGSAFS (401 aa)) the chain is on the extracellular side. 3 N-linked (GlcNAc...) asparagine glycosylation sites follow: Asn-165, Asn-239, and Asn-367. Residues 472–492 (LFVGMSMLSVVEIIYYFSVIL) traverse the membrane as a helical segment. Residues 493-535 (RKNYKLECETRSQMLHKKPKFAWPKANDTHSKEQKSVFIIHKS) are Cytoplasmic-facing.

The protein belongs to the amiloride-sensitive sodium channel (TC 1.A.6) family. In terms of tissue distribution, embryonic and larval tracheal system; dorsal trunk (but not at fusion with transverse connective), several branches and terminal cells. Also expressed in adult tracheal system; dorsal trunk, but not at the spiracles.

The protein localises to the membrane. Functionally, part of a complex that plays a role in tracheal liquid clearance. Probable role in sodium transport. This Drosophila melanogaster (Fruit fly) protein is Sodium channel protein Nach (Nach).